The primary structure comprises 397 residues: Major outer membrane porin, serovar C (397 aa).

The first 22 residues, Met-1–Ala-22, serve as a signal peptide directing secretion.

Belongs to the chlamydial porin (CP) (TC 1.B.2) family. As to quaternary structure, part of a disulfide cross-linked outer membrane complex (COMC) composed of the major outer membrane porin (MOMP), the small cysteine-rich protein (OmcA) and the large cysteine-rich periplasmic protein (OmcB).

The protein resides in the cell outer membrane. In terms of biological role, in elementary bodies (EBs, the infectious stage, which is able to survive outside the host cell) provides the structural integrity of the outer envelope through disulfide cross-links with the small cysteine-rich protein and the large cysteine-rich periplasmic protein. It has been described in publications as the Sarkosyl-insoluble COMC (Chlamydia outer membrane complex), and serves as the functional equivalent of peptidoglycan. Permits diffusion of specific solutes through the outer membrane. The chain is Major outer membrane porin, serovar C (ompA) from Chlamydia trachomatis.